The primary structure comprises 179 residues: Apoptosis regulator Bcl-2 homolog (179 aa).

The BH1 signature appears at 76 to 95 (ELFKDLINWGRICGFIVFSA). A BH2 motif is present at residues 126–141 (PWMISHGGQEEFLAFS).

The protein belongs to the Bcl-2 family. Interacts with host BECN1 (via BH3 homology domain); this interaction allows the virus to inhibit BECN1, and thus autophagy. Interacts with host BID. Interacts with host BAX.

Its subcellular location is the host mitochondrion. It is found in the host endoplasmic reticulum. Its function is as follows. Suppresses apoptosis in host cell to promote the viral replication. Has the ability to potentially bind to all the members of the proapoptotic Bcl-2 family. Inhibits autophagy by interacting with host Beclin 1 (BECN1). In Ornithodoros (relapsing fever ticks), this protein is Apoptosis regulator Bcl-2 homolog.